The following is a 255-amino-acid chain: uncharacterized protein (255 aa).

The next 2 helical transmembrane spans lie at 2–22 and 168–188; these read LLPA…YGVL and VASV…FNLF.

The protein localises to the cell membrane. This is an uncharacterized protein from Mycobacterium tuberculosis (strain ATCC 25618 / H37Rv).